We begin with the raw amino-acid sequence, 1024 residues long: Multidrug resistance protein MdtC (1024 aa).

A run of 11 helical transmembrane segments spans residues 15 to 35 (WLLTLTIVLAGFLGFRLLPVA), 333 to 353 (EVEQSLAISVGLVVLVVFAFL), 360 to 380 (LIPAVAVPVSLIGTFAAMYLC), 387 to 407 (LSLMALTVATGFVVDDAIVVL), 431 to 451 (VGFTVISMSISLVAVFLPLLL), 463 to 483 (FAITLSVSIAISLVISLTLTP), 528 to 548 (WGLLVFVATLGLTVYLYISIP), 853 to 873 (LWLILAAIATVYIVLGILYES), 897 to 917 (LFNAPFSLIALIGILLLIGIV), 953 to 973 (PIIMTTLAALLGALPLALGSG), and 984 to 1004 (ITIVGGLVMSQLLTLFTTPVV).

It belongs to the resistance-nodulation-cell division (RND) (TC 2.A.6) family. MdtC subfamily. In terms of assembly, part of a tripartite efflux system composed of MdtA, MdtB and MdtC. MdtC forms a heteromultimer with MdtB.

Its subcellular location is the cell inner membrane. The polypeptide is Multidrug resistance protein MdtC (Erwinia tasmaniensis (strain DSM 17950 / CFBP 7177 / CIP 109463 / NCPPB 4357 / Et1/99)).